The sequence spans 208 residues: Putative thymidylate kinase (208 aa).

The defective ATP-binding stretch occupies residues 8 to 15 (GIDGSGVS).

The protein belongs to the thymidylate kinase family.

It carries out the reaction dTMP + ATP = dTDP + ADP. The protein is Putative thymidylate kinase (tmk) of Aeropyrum pernix (strain ATCC 700893 / DSM 11879 / JCM 9820 / NBRC 100138 / K1).